Reading from the N-terminus, the 466-residue chain is tRNA-2-methylthio-N(6)-dimethylallyladenosine synthase (466 aa).

Positions 21-137 (GSYWITTFGC…LEDLLNQVDN (117 aa)) constitute an MTTase N-terminal domain. The [4Fe-4S] cluster site is built by C30, C66, C100, C172, C176, and C179. The region spanning 158–395 (RDSNICAWVN…NLLVEQTAKD (238 aa)) is the Radical SAM core domain. Residues 398 to 466 (TRYHNQIVEV…AFSLTGSPIQ (69 aa)) form the TRAM domain.

It belongs to the methylthiotransferase family. MiaB subfamily. In terms of assembly, monomer. It depends on [4Fe-4S] cluster as a cofactor.

Its subcellular location is the cytoplasm. It carries out the reaction N(6)-dimethylallyladenosine(37) in tRNA + (sulfur carrier)-SH + AH2 + 2 S-adenosyl-L-methionine = 2-methylsulfanyl-N(6)-dimethylallyladenosine(37) in tRNA + (sulfur carrier)-H + 5'-deoxyadenosine + L-methionine + A + S-adenosyl-L-homocysteine + 2 H(+). Catalyzes the methylthiolation of N6-(dimethylallyl)adenosine (i(6)A), leading to the formation of 2-methylthio-N6-(dimethylallyl)adenosine (ms(2)i(6)A) at position 37 in tRNAs that read codons beginning with uridine. The sequence is that of tRNA-2-methylthio-N(6)-dimethylallyladenosine synthase from Prochlorococcus marinus (strain SARG / CCMP1375 / SS120).